The primary structure comprises 101 residues: NADH-quinone oxidoreductase subunit K (101 aa).

The next 3 membrane-spanning stretches (helical) occupy residues 4–24, 30–50, and 61–81; these read LAHY…GIFL, IIIL…FVAF, and IFVF…LAIL.

Belongs to the complex I subunit 4L family. As to quaternary structure, NDH-1 is composed of 14 different subunits. Subunits NuoA, H, J, K, L, M, N constitute the membrane sector of the complex.

It localises to the cell inner membrane. The catalysed reaction is a quinone + NADH + 5 H(+)(in) = a quinol + NAD(+) + 4 H(+)(out). Functionally, NDH-1 shuttles electrons from NADH, via FMN and iron-sulfur (Fe-S) centers, to quinones in the respiratory chain. The immediate electron acceptor for the enzyme in this species is believed to be ubiquinone. Couples the redox reaction to proton translocation (for every two electrons transferred, four hydrogen ions are translocated across the cytoplasmic membrane), and thus conserves the redox energy in a proton gradient. This Burkholderia cenocepacia (strain HI2424) protein is NADH-quinone oxidoreductase subunit K.